The sequence spans 228 residues: 7-cyano-7-deazaguanine synthase (228 aa).

Residue 11 to 21 participates in ATP binding; sequence LSGGLDSATVL. Zn(2+) contacts are provided by Cys-191, Cys-201, Cys-204, and Cys-207.

This sequence belongs to the QueC family. Zn(2+) is required as a cofactor.

The enzyme catalyses 7-carboxy-7-deazaguanine + NH4(+) + ATP = 7-cyano-7-deazaguanine + ADP + phosphate + H2O + H(+). Its pathway is purine metabolism; 7-cyano-7-deazaguanine biosynthesis. In terms of biological role, catalyzes the ATP-dependent conversion of 7-carboxy-7-deazaguanine (CDG) to 7-cyano-7-deazaguanine (preQ(0)). This Magnetococcus marinus (strain ATCC BAA-1437 / JCM 17883 / MC-1) protein is 7-cyano-7-deazaguanine synthase.